We begin with the raw amino-acid sequence, 37 residues long: Large ribosomal subunit protein bL36 (37 aa).

It belongs to the bacterial ribosomal protein bL36 family.

In Hydrogenobaculum sp. (strain Y04AAS1), this protein is Large ribosomal subunit protein bL36.